The sequence spans 72 residues: Protein P13 (72 aa).

The protein resides in the virion membrane. In Pseudomonas phage phi6 (Bacteriophage phi-6), this protein is Protein P13 (P13).